A 301-amino-acid chain; its full sequence is POU domain, class 6, transcription factor 1 (301 aa).

2 tandem repeats follow at residues 11–17 (NAQGQVI) and 50–56 (NAQGQVI). The 2 X 7 AA repeats of N-A-Q-G-Q-V-I stretch occupies residues 11-56 (NAQGQVIGALPWVVNSASVATPAPAQSLQVQAVTPQLLLNAQGQVI). Residues 66–88 (QPVAVRKPSTPESPAKSEVQPIQ) form a disordered region. The POU-specific domain maps to 139-213 (EDGINLEEIR…VLEKWLNEAE (75 aa)). Positions 234–293 (KRKRRTSFTPQAIEALNAYFEKNPLPTGQEITEIAKELNYDREVVRVWFCNRRQTLKNTS) form a DNA-binding region, homeobox.

It belongs to the POU transcription factor family. Class-6 subfamily. In the embryo, widely expressed, with highest levels in the developing brain and spinal cord. In the adult, mostly found in the brain, where it is diffusely expressed with the exception of an enrichment in layer IV of the neocortex. Also found in kidney, lung, heart, adrenal, skin, and placenta. Low levels in spleen, muscle, liver, anterior pituitary, testis and ovary.

It is found in the nucleus. In terms of biological role, transcription factor that binds preferentially to a variant of the octamer motif (5'-ATGATAAT-3'). The polypeptide is POU domain, class 6, transcription factor 1 (Pou6f1) (Rattus norvegicus (Rat)).